Reading from the N-terminus, the 596-residue chain is Aspartate--tRNA(Asp/Asn) ligase (596 aa).

An L-aspartate-binding site is contributed by glutamate 175. The interval 199–202 (QMFK) is aspartate. Residues arginine 221 and histidine 451 each coordinate L-aspartate. 221-223 (RDE) is an ATP binding site. Glutamate 485 is an ATP binding site. Arginine 492 contacts L-aspartate. Position 537 to 540 (537 to 540 (GVDR)) interacts with ATP.

Belongs to the class-II aminoacyl-tRNA synthetase family. Type 1 subfamily. As to quaternary structure, homodimer.

The protein localises to the cytoplasm. It carries out the reaction tRNA(Asx) + L-aspartate + ATP = L-aspartyl-tRNA(Asx) + AMP + diphosphate. Functionally, aspartyl-tRNA synthetase with relaxed tRNA specificity since it is able to aspartylate not only its cognate tRNA(Asp) but also tRNA(Asn). Reaction proceeds in two steps: L-aspartate is first activated by ATP to form Asp-AMP and then transferred to the acceptor end of tRNA(Asp/Asn). The polypeptide is Aspartate--tRNA(Asp/Asn) ligase (Zymomonas mobilis subsp. mobilis (strain ATCC 31821 / ZM4 / CP4)).